We begin with the raw amino-acid sequence, 230 residues long: 2,3-bisphosphoglycerate-dependent phosphoglycerate mutase 2 (230 aa).

Residues 8–15 (RHGQSEWN), 21–22 (TG), Arg-60, 87–90 (ERHY), Lys-98, 114–115 (RR), and 183–184 (GN) contribute to the substrate site. The active-site Tele-phosphohistidine intermediate is the His-9. Catalysis depends on Glu-87, which acts as the Proton donor/acceptor.

It belongs to the phosphoglycerate mutase family. BPG-dependent PGAM subfamily.

It carries out the reaction (2R)-2-phosphoglycerate = (2R)-3-phosphoglycerate. It functions in the pathway carbohydrate degradation; glycolysis; pyruvate from D-glyceraldehyde 3-phosphate: step 3/5. In terms of biological role, catalyzes the interconversion of 2-phosphoglycerate and 3-phosphoglycerate. This chain is 2,3-bisphosphoglycerate-dependent phosphoglycerate mutase 2, found in Lactiplantibacillus plantarum (strain ATCC BAA-793 / NCIMB 8826 / WCFS1) (Lactobacillus plantarum).